Consider the following 390-residue polypeptide: Trehalose-phosphate phosphatase (390 aa).

The active-site Nucleophile is the aspartate 150. Mg(2+) is bound by residues aspartate 150, aspartate 152, and aspartate 333. 150 to 152 (DFD) contacts substrate.

The protein belongs to the trehalose phosphatase family. Mg(2+) serves as cofactor.

It catalyses the reaction alpha,alpha-trehalose 6-phosphate + H2O = alpha,alpha-trehalose + phosphate. It participates in glycan biosynthesis; trehalose biosynthesis. Removes the phosphate from trehalose 6-phosphate to produce free trehalose. In Mycobacterium ulcerans (strain Agy99), this protein is Trehalose-phosphate phosphatase (otsB).